The sequence spans 505 residues: Probable ribonuclease FAU-1 (505 aa).

A disordered region spans residues 389-408 (ISGHGSGTYDELGTPRESGD).

The protein belongs to the FAU-1 family.

Probable RNase involved in rRNA stability through maturation and/or degradation of precursor rRNAs. Binds to RNA in loop regions with AU-rich sequences. The sequence is that of Probable ribonuclease FAU-1 from Haloquadratum walsbyi (strain DSM 16790 / HBSQ001).